The sequence spans 148 residues: Small ribosomal subunit protein uS12 (148 aa).

The protein belongs to the universal ribosomal protein uS12 family. Part of the 30S ribosomal subunit.

With S4 and S5 plays an important role in translational accuracy. Located at the interface of the 30S and 50S subunits. This is Small ribosomal subunit protein uS12 from Methanocaldococcus jannaschii (strain ATCC 43067 / DSM 2661 / JAL-1 / JCM 10045 / NBRC 100440) (Methanococcus jannaschii).